Consider the following 328-residue polypeptide: Ornithine transcarbamylase, mitochondrial (328 aa).

The N-terminal 6 residues, 1-6, are a transit peptide targeting the mitochondrion; the sequence is GGQPLQ. An N6-acetyllysine; alternate modification is found at K44. K44 is subject to N6-succinyllysine; alternate. Position 54 is an N6-succinyllysine (K54). Position 62 is an N6-acetyllysine; alternate (K62). The residue at position 62 (K62) is an N6-succinyllysine; alternate. 64–68 serves as a coordination point for carbamoyl phosphate; sequence STRTR. A Phosphoserine modification is found at S107. Residue R115 participates in carbamoyl phosphate binding. Residue R115 coordinates L-ornithine. Residue K118 is modified to N6-acetyllysine; alternate. An N6-succinyllysine; alternate modification is found at K118. Carbamoyl phosphate is bound at residue H142. Position 173 (N173) interacts with L-ornithine. N6-acetyllysine; alternate occurs at positions 195, 205, and 212. Residues K195, K205, and K212 each carry the N6-succinyllysine; alternate modification. 237-241 serves as a coordination point for L-ornithine; that stretch reads DTWIS. K248 and K263 each carry N6-succinyllysine. An L-ornithine-binding site is contributed by 276 to 279; the sequence is HCLP. C277 is a catalytic residue. Residue K281 is modified to N6-acetyllysine; alternate. K281 bears the N6-succinyllysine; alternate mark. R304 is a carbamoyl phosphate binding site. R304 provides a ligand contact to L-ornithine.

This sequence belongs to the aspartate/ornithine carbamoyltransferase superfamily. OTCase family. In terms of assembly, homotrimer. Post-translationally, acetylation at Lys-62 negatively regulates ornithine carbamoyltransferase activity in response to nutrient signals.

Its subcellular location is the mitochondrion matrix. The enzyme catalyses carbamoyl phosphate + L-ornithine = L-citrulline + phosphate + H(+). It functions in the pathway nitrogen metabolism; urea cycle; L-citrulline from L-ornithine and carbamoyl phosphate: step 1/1. With respect to regulation, negatively regulated by lysine acetylation. Catalyzes the second step of the urea cycle, the condensation of carbamoyl phosphate with L-ornithine to form L-citrulline. The urea cycle ensures the detoxification of ammonia by converting it to urea for excretion. The sequence is that of Ornithine transcarbamylase, mitochondrial from Sus scrofa (Pig).